A 354-amino-acid polypeptide reads, in one-letter code: Rhodopsin (354 aa).

The Extracellular segment spans residues 1 to 36 (MNGTEGPDFYVPMVNTTGIVRSPYDYPQYYLVNPAA). Residues Asn-2 and Asn-15 are each glycosylated (N-linked (GlcNAc...) asparagine). A helical transmembrane segment spans residues 37–61 (FSMLAAYMFFLILVGFPVNFLTLYV). At 62–73 (TMEHKKLRTPLN) the chain is on the cytoplasmic side. A helical transmembrane segment spans residues 74–96 (YILLNLAVANLFMVIGGFTTTMY). Over 97–110 (TSMHGYFVLGRTGC) the chain is Extracellular. The cysteines at positions 110 and 187 are disulfide-linked. Residues 111-133 (NLEGFFATLGGEIALWSLVVLAV) form a helical membrane-spanning segment. A 'Ionic lock' involved in activated form stabilization motif is present at residues 134 to 136 (ERW). Residues 134-152 (ERWVVVCKPISNFRFGENH) are Cytoplasmic-facing. A helical transmembrane segment spans residues 153-173 (AVMGVSFTWLMACACSVPPLF). The Extracellular portion of the chain corresponds to 174–202 (GWSRYIPEGMQCSCGIDYYTRAPGYNNES). The chain crosses the membrane as a helical span at residues 203 to 224 (FVIYMFVCHFSIPLTIIFFCYG). The Cytoplasmic portion of the chain corresponds to 225–252 (RLLCAVKDAAAAQQESETTQRAEREVSR). A helical membrane pass occupies residues 253–274 (MVVIMVIGFLICWLPYASVAWF). Residues 275-286 (IFTHQGSEFGPV) lie on the Extracellular side of the membrane. Residues 287–308 (FMTIPAFFAKSSAIYNPMIYIC) form a helical membrane-spanning segment. Lys-296 is modified (N6-(retinylidene)lysine). Residues 309 to 354 (MNKQFRHCMITTLCCGKNPFEEEEGASTTASKTEASSVSSSHVSPA) are Cytoplasmic-facing. S-palmitoyl cysteine attachment occurs at residues Cys-322 and Cys-323. The interval 333 to 354 (GASTTASKTEASSVSSSHVSPA) is disordered. The span at 334 to 354 (ASTTASKTEASSVSSSHVSPA) shows a compositional bias: low complexity.

Belongs to the G-protein coupled receptor 1 family. Opsin subfamily. Post-translationally, phosphorylated on some or all of the serine and threonine residues present in the C-terminal region. In terms of processing, contains one covalently linked retinal chromophore.

Its subcellular location is the membrane. It is found in the cell projection. The protein resides in the cilium. It localises to the photoreceptor outer segment. In terms of biological role, photoreceptor required for image-forming vision at low light intensity. While most salt water fish species use retinal as chromophore, most freshwater fish use 3-dehydroretinal, or a mixture of retinal and 3-dehydroretinal. Light-induced isomerization of 11-cis to all-trans retinal triggers a conformational change that activates signaling via G-proteins. Subsequent receptor phosphorylation mediates displacement of the bound G-protein alpha subunit by arrestin and terminates signaling. The chain is Rhodopsin (rho) from Zeus faber (John Dory).